We begin with the raw amino-acid sequence, 965 residues long: UvrABC system protein A (965 aa).

32–39 (GLSGSGKS) is a binding site for ATP. Residues 254–281 (CPVCDYSLPELEPRLFSFNAPMGACPAC) form a C4-type zinc finger. 2 consecutive ABC transporter domains span residues 311 to 588 (WDRR…PRSL) and 608 to 937 (PNAT…HFLA). 641 to 648 (GVSGSGKS) lines the ATP pocket. The segment at 740–766 (CEACEGDGLIKVEMHFLPDVYVPCDVC) adopts a C4-type zinc-finger fold.

It belongs to the ABC transporter superfamily. UvrA family. As to quaternary structure, forms a heterotetramer with UvrB during the search for lesions.

Its subcellular location is the cytoplasm. The UvrABC repair system catalyzes the recognition and processing of DNA lesions. UvrA is an ATPase and a DNA-binding protein. A damage recognition complex composed of 2 UvrA and 2 UvrB subunits scans DNA for abnormalities. When the presence of a lesion has been verified by UvrB, the UvrA molecules dissociate. This chain is UvrABC system protein A, found in Xylella fastidiosa (strain 9a5c).